The following is a 986-amino-acid chain: DNA polymerase I (986 aa).

The 303-residue stretch at 1 to 303 (MFMSAKSPLL…RTFIDKIQAF (303 aa)) folds into the 5'-3' exonuclease domain. A 3'-5' exonuclease domain is found at 304 to 592 (HRNFSDNQSP…MEDRGIRIDC (289 aa)). The disordered stretch occupies residues 308–327 (SDNQSPVPMGNEADNGEPKK). The polymerase stretch occupies residues 593–986 (DYLQTLSQQL…HRGSNWMEAK (394 aa)).

This sequence belongs to the DNA polymerase type-A family. In terms of assembly, single-chain monomer with multiple functions.

It carries out the reaction DNA(n) + a 2'-deoxyribonucleoside 5'-triphosphate = DNA(n+1) + diphosphate. In terms of biological role, in addition to polymerase activity, this DNA polymerase exhibits 3'-5' and 5'-3' exonuclease activity. The sequence is that of DNA polymerase I (polA) from Synechocystis sp. (strain ATCC 27184 / PCC 6803 / Kazusa).